We begin with the raw amino-acid sequence, 267 residues long: Non-homologous end joining protein Ku (267 aa).

The 185-residue stretch at 11 to 195 (AVGQVSCAVA…KVKGEMLELA (185 aa)) folds into the Ku domain. The interval 229-267 (GRKPKRKAAPKKAREPSDLMAALRESVAATERPRRRKAG) is disordered.

The protein belongs to the prokaryotic Ku family. Homodimer. Interacts with LigD.

Its function is as follows. With LigD forms a non-homologous end joining (NHEJ) DNA repair enzyme, which repairs dsDNA breaks with reduced fidelity. Binds linear dsDNA with 5'- and 3'- overhangs but not closed circular dsDNA nor ssDNA. Recruits and stimulates the ligase activity of LigD. In Cereibacter sphaeroides (strain KD131 / KCTC 12085) (Rhodobacter sphaeroides), this protein is Non-homologous end joining protein Ku.